Reading from the N-terminus, the 65-residue chain is Large ribosomal subunit protein bL35c (65 aa).

This sequence belongs to the bacterial ribosomal protein bL35 family.

It localises to the plastid. Its subcellular location is the cyanelle. In Cyanophora paradoxa, this protein is Large ribosomal subunit protein bL35c (rpl35).